Here is a 504-residue protein sequence, read N- to C-terminus: Maturase K (504 aa).

This sequence belongs to the intron maturase 2 family. MatK subfamily.

It is found in the plastid. Its subcellular location is the chloroplast. Usually encoded in the trnK tRNA gene intron. Probably assists in splicing its own and other chloroplast group II introns. In Hamamelis japonica (Japanese witch hazel), this protein is Maturase K.